A 353-amino-acid polypeptide reads, in one-letter code: 3-isopropylmalate dehydrogenase (353 aa).

Positions 97, 107, 135, and 219 each coordinate substrate. The Mg(2+) site is built by Asp-219, Asp-243, and Asp-247.

This sequence belongs to the isocitrate and isopropylmalate dehydrogenases family. LeuB type 1 subfamily. As to quaternary structure, homodimer. Requires Mg(2+) as cofactor. Mn(2+) serves as cofactor.

It localises to the cytoplasm. The catalysed reaction is (2R,3S)-3-isopropylmalate + NAD(+) = 4-methyl-2-oxopentanoate + CO2 + NADH. Its pathway is amino-acid biosynthesis; L-leucine biosynthesis; L-leucine from 3-methyl-2-oxobutanoate: step 3/4. Catalyzes the oxidation of 3-carboxy-2-hydroxy-4-methylpentanoate (3-isopropylmalate) to 3-carboxy-4-methyl-2-oxopentanoate. The product decarboxylates to 4-methyl-2 oxopentanoate. This chain is 3-isopropylmalate dehydrogenase, found in Bacteroides fragilis (strain ATCC 25285 / DSM 2151 / CCUG 4856 / JCM 11019 / LMG 10263 / NCTC 9343 / Onslow / VPI 2553 / EN-2).